Here is a 146-residue protein sequence, read N- to C-terminus: Transcriptional regulator MraZ (146 aa).

2 SpoVT-AbrB domains span residues 7 to 54 and 83 to 126; these read NATN…GLDL and GVFV…QPEA.

This sequence belongs to the MraZ family. Forms oligomers.

The protein localises to the cytoplasm. The protein resides in the nucleoid. The protein is Transcriptional regulator MraZ of Rhizobium rhizogenes (strain K84 / ATCC BAA-868) (Agrobacterium radiobacter).